The chain runs to 419 residues: L-rhamnose isomerase (419 aa).

Positions 262, 294, and 296 each coordinate Mn(2+).

The protein belongs to the rhamnose isomerase family. Homotetramer. The cofactor is Mn(2+).

Its subcellular location is the cytoplasm. The catalysed reaction is L-rhamnopyranose = L-rhamnulose. Its pathway is carbohydrate degradation; L-rhamnose degradation; glycerone phosphate from L-rhamnose: step 1/3. Catalyzes the interconversion of L-rhamnose and L-rhamnulose. This is L-rhamnose isomerase from Klebsiella pneumoniae (strain 342).